Consider the following 90-residue polypeptide: ATP synthase subunit e, mitochondrial (90 aa).

An N-acetylserine modification is found at Ser-2. A helical transmembrane segment spans residues 7–23 (VLRWSALGAGVVYGFVH).

As to quaternary structure, F-type ATP synthases have 2 components, the catalytic core F(1) and the membrane-embedded component F(0), linked together by a central stalk and a peripheral stalk. The central stalk, also called rotor shaft, is often seen as part of F(1). The peripheral stalk is seen as part of F(0). F(0) contains the membrane channel next to the rotor. F-type ATP synthases form dimers but each monomer functions independently in ATP generation. The dimer consists of 17 different polypeptides: ATP1 (subunit alpha, 3 molecules per monomer, part of F(1)), ATP2 (subunit beta, 3 copies per monomer, part of F(1)), ATP3 (subunit gamma, part of the central stalk), ATP4 (subunit b, part of the peripheral stalk), ATP5/OSCP (subunit 5/OSCP, part of the peripheral stalk), ATP6 (subunit a, part of the peripheral stalk), ATP7 (subunit d, part of the peripheral stalk), ATP8 (subunit 8, part of the peripheral stalk), OLI1 (subunit c, part of the rotor, 10 molecules per monomer), ATP14 (subunit h, part of the peripheral stalk), ATP15 (subunit epsilon, part of the central stalk), ATP16 (subunit delta, part of the central stalk), ATP17 (subunit f, part of the peripheral stalk), ATP18 (subunit i/j, part of the peripheral stalk), ATP19 (subunit k, dimer-specific, at interface between monomers), ATP20 (subunit g, at interface between monomers), TIM11 (subunit e, at interface between monomers).

The protein localises to the mitochondrion inner membrane. Functionally, mitochondrial membrane ATP synthase (F(1)F(0) ATP synthase or Complex V) produces ATP from ADP in the presence of a proton gradient across the membrane which is generated by electron transport complexes of the respiratory chain. F-type ATP synthases consist of two structural domains, F(1) - containing the extramembraneous catalytic core, and F(0) - containing the membrane proton channel, linked together by a central stalk and a peripheral stalk. During catalysis, ATP synthesis in the catalytic domain of F(1) is coupled via a rotary mechanism of the central stalk subunits to proton translocation. Part of the complex F(0) domain. Minor subunit located with subunit a/ATP6 in the membrane. Together with subunit g/ATP20, probably contributes to membrane curvature at the site of the ATP synthase dimer, ultimately contributing to formation of cristae. In Yarrowia lipolytica (strain CLIB 122 / E 150) (Yeast), this protein is ATP synthase subunit e, mitochondrial.